A 426-amino-acid polypeptide reads, in one-letter code: Lipase 7 (426 aa).

A signal peptide spans Met1–Gln15. Asn74, Asn175, and Asn179 each carry an N-linked (GlcNAc...) asparagine glycan. Intrachain disulfides connect Cys108-Cys269 and Cys341-Cys385. Ser190 functions as the Charge relay system in the catalytic mechanism. A glycan (N-linked (GlcNAc...) asparagine) is linked at Asn223. His358 serves as the catalytic Charge relay system. Residues Asn378, Asn379, Asn422, and Asn423 are each glycosylated (N-linked (GlcNAc...) asparagine).

This sequence belongs to the AB hydrolase superfamily. Lipase family. Class Lip subfamily.

The enzyme catalyses a triacylglycerol + H2O = a diacylglycerol + a fatty acid + H(+). In terms of biological role, secreted lipase that is able to hydrolze both the neutral triacylglycerols and the monopalmitate ester Tween 40, allowing the use of hydrolyzed products as carbon sources. Has broad lipolytic activity, which may be important for colonization and subsequent infection, therefore contributing to the persistence and virulence in human tissue. The protein is Lipase 7 of Candida albicans (strain SC5314 / ATCC MYA-2876) (Yeast).